The sequence spans 40 residues: Putative protein FAM86JP (40 aa).

The interval 1–40 is disordered; that stretch reads MPGAFSQNSSKRRAVLPRSHRVAGRGPAEAGCLPGAPAGS. Residues 10–23 are compositionally biased toward basic residues; it reads SKRRAVLPRSHRVA.

The protein is Putative protein FAM86JP of Homo sapiens (Human).